Consider the following 207-residue polypeptide: Guanylate kinase (207 aa).

The Guanylate kinase-like domain maps to 6–185 (GLLIVLSGPS…AKQRIQSIVE (180 aa)). 13–20 (GPSGVGKG) contacts ATP.

This sequence belongs to the guanylate kinase family.

The protein localises to the cytoplasm. It carries out the reaction GMP + ATP = GDP + ADP. Functionally, essential for recycling GMP and indirectly, cGMP. This Staphylococcus saprophyticus subsp. saprophyticus (strain ATCC 15305 / DSM 20229 / NCIMB 8711 / NCTC 7292 / S-41) protein is Guanylate kinase.